The following is a 297-amino-acid chain: Cell division protein ZipA (297 aa).

Residue M1 is a topological domain, periplasmic. The helical transmembrane segment at 2-22 threads the bilayer; that stretch reads EIGLREWLILIGIIVIAGILF. Topologically, residues 23–297 are cytoplasmic; it reads DGWRRMRGGK…FERRALTQKR (275 aa). A disordered region spans residues 48-151; that stretch reads DEEGGSAEVL…AAPASNSVKE (104 aa). Basic and acidic residues predominate over residues 83 to 92; it reads ARDREREPKP. A compositionally biased stretch (acidic residues) spans 124–133; that stretch reads LFSDSDDDFA.

This sequence belongs to the ZipA family. As to quaternary structure, interacts with FtsZ via their C-terminal domains.

The protein resides in the cell inner membrane. Essential cell division protein that stabilizes the FtsZ protofilaments by cross-linking them and that serves as a cytoplasmic membrane anchor for the Z ring. Also required for the recruitment to the septal ring of downstream cell division proteins. The protein is Cell division protein ZipA of Pseudomonas putida (strain ATCC 47054 / DSM 6125 / CFBP 8728 / NCIMB 11950 / KT2440).